Here is a 193-residue protein sequence, read N- to C-terminus: MEEIKVHIGKTVALMNDNIDTDQIIPKSFLKRIERTGFGEFLFDSWRYLPNRKPNPDFPLNAPDRQEATILITGDNFGCGSSREHAAWALLDYRFRVIIAGSYSDIFYMNCTKNGVLPIVLPREAREKLAKIAADENVTIDLPNQQVISSVGTYPFEIDATWKNKFINGLDDIAITFEHIDAIKAYEQKVDSI.

It belongs to the LeuD family. LeuD type 1 subfamily. In terms of assembly, heterodimer of LeuC and LeuD.

It carries out the reaction (2R,3S)-3-isopropylmalate = (2S)-2-isopropylmalate. It functions in the pathway amino-acid biosynthesis; L-leucine biosynthesis; L-leucine from 3-methyl-2-oxobutanoate: step 2/4. In terms of biological role, catalyzes the isomerization between 2-isopropylmalate and 3-isopropylmalate, via the formation of 2-isopropylmaleate. This is 3-isopropylmalate dehydratase small subunit from Listeria monocytogenes serotype 4b (strain CLIP80459).